Reading from the N-terminus, the 561-residue chain is Urocanate hydratase (561 aa).

NAD(+)-binding positions include 52–53 (GG), glutamine 130, 176–178 (GMG), glutamate 196, arginine 201, 242–243 (NA), 263–267 (QTSAH), 273–274 (YL), and tyrosine 322. The active site involves cysteine 410. An NAD(+)-binding site is contributed by glycine 492.

The protein belongs to the urocanase family. Requires NAD(+) as cofactor.

It localises to the cytoplasm. The enzyme catalyses 4-imidazolone-5-propanoate = trans-urocanate + H2O. It functions in the pathway amino-acid degradation; L-histidine degradation into L-glutamate; N-formimidoyl-L-glutamate from L-histidine: step 2/3. Functionally, catalyzes the conversion of urocanate to 4-imidazolone-5-propionate. The polypeptide is Urocanate hydratase (Salmonella newport (strain SL254)).